The sequence spans 213 residues: Probable nicotinate-nucleotide adenylyltransferase (213 aa).

Belongs to the NadD family.

The enzyme catalyses nicotinate beta-D-ribonucleotide + ATP + H(+) = deamido-NAD(+) + diphosphate. Its pathway is cofactor biosynthesis; NAD(+) biosynthesis; deamido-NAD(+) from nicotinate D-ribonucleotide: step 1/1. Its function is as follows. Catalyzes the reversible adenylation of nicotinate mononucleotide (NaMN) to nicotinic acid adenine dinucleotide (NaAD). The polypeptide is Probable nicotinate-nucleotide adenylyltransferase (Escherichia coli O17:K52:H18 (strain UMN026 / ExPEC)).